A 197-amino-acid chain; its full sequence is GTP cyclohydrolase 1 (197 aa).

Positions 88, 91, and 160 each coordinate Zn(2+).

The protein belongs to the GTP cyclohydrolase I family. Homomer.

The enzyme catalyses GTP + H2O = 7,8-dihydroneopterin 3'-triphosphate + formate + H(+). Its pathway is cofactor biosynthesis; 7,8-dihydroneopterin triphosphate biosynthesis; 7,8-dihydroneopterin triphosphate from GTP: step 1/1. The sequence is that of GTP cyclohydrolase 1 from Clostridium beijerinckii (strain ATCC 51743 / NCIMB 8052) (Clostridium acetobutylicum).